A 264-amino-acid chain; its full sequence is MSNSNIHTTAIIAEGAKFGKNVKVGPYCIIGPEVVLHDNVELKSHVVIDGITEIGENTVIYPFASIGQPPQILKYANERSSTIIGSNNTIREYVTVQAGSKSGGMITRVGNNNLFMVGVHIGHDCKIGNNLVFANYVSLAGHIKVGDYAIIGGLSAVHQYTRIGEYSMIGGLSPVGADVIPFGLVSSKRAVLEGLNLIGMNRKGFDKADSLTALNAVEEIFLGEGNFVDRIKQVAEKYKNNSIVTQIIDFLNQDSSRAFCHFKK.

It belongs to the transferase hexapeptide repeat family. LpxA subfamily. As to quaternary structure, homotrimer.

The protein localises to the cytoplasm. The catalysed reaction is a (3R)-hydroxyacyl-[ACP] + UDP-N-acetyl-alpha-D-glucosamine = a UDP-3-O-[(3R)-3-hydroxyacyl]-N-acetyl-alpha-D-glucosamine + holo-[ACP]. Its pathway is glycolipid biosynthesis; lipid IV(A) biosynthesis; lipid IV(A) from (3R)-3-hydroxytetradecanoyl-[acyl-carrier-protein] and UDP-N-acetyl-alpha-D-glucosamine: step 1/6. Its function is as follows. Involved in the biosynthesis of lipid A, a phosphorylated glycolipid that anchors the lipopolysaccharide to the outer membrane of the cell. This is Acyl-[acyl-carrier-protein]--UDP-N-acetylglucosamine O-acyltransferase from Rickettsia prowazekii (strain Madrid E).